A 333-amino-acid polypeptide reads, in one-letter code: Fructose-1,6-bisphosphatase class 1 (333 aa).

4 residues coordinate Mg(2+): glutamate 89, aspartate 110, leucine 112, and aspartate 113. Residues 113–116 (DGSS), asparagine 206, tyrosine 239, 257–259 (YLY), and lysine 269 each bind substrate. A Mg(2+)-binding site is contributed by glutamate 275.

The protein belongs to the FBPase class 1 family. Homotetramer. It depends on Mg(2+) as a cofactor.

The protein resides in the cytoplasm. It carries out the reaction beta-D-fructose 1,6-bisphosphate + H2O = beta-D-fructose 6-phosphate + phosphate. Its pathway is carbohydrate biosynthesis; gluconeogenesis. This Sodalis glossinidius (strain morsitans) protein is Fructose-1,6-bisphosphatase class 1.